The chain runs to 156 residues: MLQSQFAQAPRLALADTIIDAKARKNLSWQDLTDGTGLSLAFVTAALLGQHALPATAADLVCDKLGLDQDASRLLQSIPLRGSIAGGIPTDPTVYRFYEMLQVYGSTLKALVHEQFGDGIISAINFKLDIKKVEDPEGGSRAVITLDGKYLPTKPF.

Residues R96, E99, and S122 contribute to the active site.

The protein belongs to the cyanase family.

It catalyses the reaction cyanate + hydrogencarbonate + 3 H(+) = NH4(+) + 2 CO2. Catalyzes the reaction of cyanate with bicarbonate to produce ammonia and carbon dioxide. The sequence is that of Cyanate hydratase from Pseudomonas fluorescens (strain ATCC BAA-477 / NRRL B-23932 / Pf-5).